Reading from the N-terminus, the 213-residue chain is Thymidylate kinase (213 aa).

10-17 lines the ATP pocket; that stretch reads GLEGAGKT.

This sequence belongs to the thymidylate kinase family.

The catalysed reaction is dTMP + ATP = dTDP + ADP. Its function is as follows. Phosphorylation of dTMP to form dTDP in both de novo and salvage pathways of dTTP synthesis. The polypeptide is Thymidylate kinase (Salmonella choleraesuis (strain SC-B67)).